Consider the following 133-residue polypeptide: Ribosome-binding factor A (133 aa).

It belongs to the RbfA family. In terms of assembly, monomer. Binds 30S ribosomal subunits, but not 50S ribosomal subunits or 70S ribosomes.

It is found in the cytoplasm. In terms of biological role, one of several proteins that assist in the late maturation steps of the functional core of the 30S ribosomal subunit. Associates with free 30S ribosomal subunits (but not with 30S subunits that are part of 70S ribosomes or polysomes). Required for efficient processing of 16S rRNA. May interact with the 5'-terminal helix region of 16S rRNA. The polypeptide is Ribosome-binding factor A (Bordetella bronchiseptica (strain ATCC BAA-588 / NCTC 13252 / RB50) (Alcaligenes bronchisepticus)).